Consider the following 74-residue polypeptide: Small ribosomal subunit protein bS21 (74 aa).

This sequence belongs to the bacterial ribosomal protein bS21 family.

The polypeptide is Small ribosomal subunit protein bS21 (Coxiella burnetii (strain Dugway 5J108-111)).